The sequence spans 158 residues: Endoribonuclease YbeY (158 aa).

Zn(2+)-binding residues include His-124, His-128, and His-134.

This sequence belongs to the endoribonuclease YbeY family. Zn(2+) serves as cofactor.

The protein resides in the cytoplasm. Its function is as follows. Single strand-specific metallo-endoribonuclease involved in late-stage 70S ribosome quality control and in maturation of the 3' terminus of the 16S rRNA. In Caldanaerobacter subterraneus subsp. tengcongensis (strain DSM 15242 / JCM 11007 / NBRC 100824 / MB4) (Thermoanaerobacter tengcongensis), this protein is Endoribonuclease YbeY.